Here is an 860-residue protein sequence, read N- to C-terminus: Elastin (860 aa).

The signal sequence occupies residues 1–27 (MAGLTAVVPQPGVLLILLLNLLHPAQP). Pro-35 and Pro-72 each carry 4-hydroxyproline. A Hydroxyproline modification is found at Pro-84. Pro-105 carries the 4-hydroxyproline modification. Allysine is present on residues Lys-123 and Lys-127. A 4-hydroxyproline mark is found at Pro-217, Pro-230, Pro-233, and Pro-253. Residues Lys-299, Lys-318, and Lys-321 each carry the allysine modification. 4-hydroxyproline is present on Pro-346. 2 positions are modified to allysine: Lys-368 and Lys-371. Pro-383 bears the Hydroxyproline mark. 4-hydroxyproline is present on residues Pro-399 and Pro-405. A hydroxyproline mark is found at Pro-410 and Pro-415. An allysine mark is found at Lys-431, Lys-435, Lys-438, Lys-481, and Lys-484. 4-hydroxyproline is present on residues Pro-498 and Pro-519. Allysine occurs at positions 534, 595, 599, and 603. 4-hydroxyproline is present on residues Pro-617, Pro-626, Pro-644, Pro-653, and Pro-661. Allysine is present on residues Lys-668 and Lys-671. The residue at position 702 (Pro-702) is a 4-hydroxyproline. 4 positions are modified to allysine: Lys-719, Lys-723, Lys-783, and Lys-786. The residue at position 832 (Pro-832) is a 4-hydroxyproline. Cys-850 and Cys-855 are oxidised to a cystine.

This sequence belongs to the elastin family. The polymeric elastin chains are cross-linked together into an extensible 3D network. Forms a ternary complex with BGN and MFAP2. Interacts with MFAP2 via divalent cations (calcium &gt; magnesium &gt; manganese) in a dose-dependent and saturating manner. Interacts with FBLN5 and FBN1. Forms a ternary complex with FBN1 and FBLN2 or FBLN5. Interacts with MFAP4 in a Ca (2+)-dependent manner; this interaction promotes ELN self-assembly. Interacts with EFEMP2 with moderate affinity. In terms of processing, elastin is formed through the cross-linking of its soluble precursor tropoelastin. Cross-linking is initiated through the action of lysyl oxidase on exposed lysines to form allysine. Subsequent spontaneous condensation reactions with other allysine or unmodified lysine residues result in various bi-, tri-, and tetrafunctional cross-links. The most abundant cross-links in mature elastin fibers are lysinonorleucine, allysine aldol, desmosine, and isodesmosine. Hydroxylation on proline residues within the sequence motif, GXPG, is most likely to be 4-hydroxy as this fits the requirement for 4-hydroxylation in vertebrates.

It is found in the secreted. Its subcellular location is the extracellular space. The protein resides in the extracellular matrix. In terms of biological role, major structural protein of tissues such as aorta and nuchal ligament, which must expand rapidly and recover completely. Molecular determinant of the late arterial morphogenesis, stabilizing arterial structure by regulating proliferation and organization of vascular smooth muscle. The polypeptide is Elastin (Eln) (Mus musculus (Mouse)).